A 162-amino-acid polypeptide reads, in one-letter code: Phosphopantetheine adenylyltransferase (162 aa).

Position 11 (S11) interacts with substrate. ATP is bound by residues 11 to 12 (SF) and H19. Residues K43, V76, and R90 each coordinate substrate. ATP is bound by residues 91–93 (GLR), E101, and 126–132 (LKFVSSS).

Belongs to the bacterial CoaD family. In terms of assembly, homohexamer. Requires Mg(2+) as cofactor.

It localises to the cytoplasm. The catalysed reaction is (R)-4'-phosphopantetheine + ATP + H(+) = 3'-dephospho-CoA + diphosphate. It functions in the pathway cofactor biosynthesis; coenzyme A biosynthesis; CoA from (R)-pantothenate: step 4/5. Its function is as follows. Reversibly transfers an adenylyl group from ATP to 4'-phosphopantetheine, yielding dephospho-CoA (dPCoA) and pyrophosphate. The chain is Phosphopantetheine adenylyltransferase from Streptococcus suis (strain 05ZYH33).